We begin with the raw amino-acid sequence, 729 residues long: Phosphoribosylformylglycinamidine synthase subunit PurL (729 aa).

The active site involves His-54. ATP-binding residues include Tyr-57 and Lys-96. Position 98 (Glu-98) interacts with Mg(2+). Substrate is bound by residues 99–102 and Arg-121; that span reads SHNH. The active-site Proton acceptor is the His-100. Asp-122 is a binding site for Mg(2+). Residue Gln-245 participates in substrate binding. Position 273 (Asp-273) interacts with Mg(2+). A substrate-binding site is contributed by 317-319; it reads ETQ. Residues Asp-495 and Gly-532 each coordinate ATP. Residue Asn-533 coordinates Mg(2+). Ser-535 provides a ligand contact to substrate.

The protein belongs to the FGAMS family. In terms of assembly, monomer. Part of the FGAM synthase complex composed of 1 PurL, 1 PurQ and 2 PurS subunits.

The protein resides in the cytoplasm. The enzyme catalyses N(2)-formyl-N(1)-(5-phospho-beta-D-ribosyl)glycinamide + L-glutamine + ATP + H2O = 2-formamido-N(1)-(5-O-phospho-beta-D-ribosyl)acetamidine + L-glutamate + ADP + phosphate + H(+). Its pathway is purine metabolism; IMP biosynthesis via de novo pathway; 5-amino-1-(5-phospho-D-ribosyl)imidazole from N(2)-formyl-N(1)-(5-phospho-D-ribosyl)glycinamide: step 1/2. In terms of biological role, part of the phosphoribosylformylglycinamidine synthase complex involved in the purines biosynthetic pathway. Catalyzes the ATP-dependent conversion of formylglycinamide ribonucleotide (FGAR) and glutamine to yield formylglycinamidine ribonucleotide (FGAM) and glutamate. The FGAM synthase complex is composed of three subunits. PurQ produces an ammonia molecule by converting glutamine to glutamate. PurL transfers the ammonia molecule to FGAR to form FGAM in an ATP-dependent manner. PurS interacts with PurQ and PurL and is thought to assist in the transfer of the ammonia molecule from PurQ to PurL. The chain is Phosphoribosylformylglycinamidine synthase subunit PurL from Staphylococcus aureus (strain USA300).